Consider the following 135-residue polypeptide: Transcriptional regulator HosA (135 aa).

The HTH marR-type domain maps to 4–134 (RNKAFHQLRQ…FMQLVRKMMN (131 aa)). Residues 48 to 71 (QVALIEAAVSTKATLAEMLARMEN) constitute a DNA-binding region (H-T-H motif).

Functionally, involved in the temperature-dependent positive control of flagellum-driven swimming motility and cellular aggregation. Regulates fliC expression by directly interacting with fliC promoter. This Escherichia coli O111:H- protein is Transcriptional regulator HosA (hosA).